The chain runs to 40 residues: Ribosome-inactivating protein saporin-1 (40 aa).

It belongs to the ribosome-inactivating protein family. Type 1 RIP subfamily.

It catalyses the reaction Endohydrolysis of the N-glycosidic bond at one specific adenosine on the 28S rRNA.. Its function is as follows. Ribosome-inactivating protein of type 1, inhibits protein synthesis in animal cells. The protein is Ribosome-inactivating protein saporin-1 (SAP1) of Saponaria officinalis (Common soapwort).